Reading from the N-terminus, the 285-residue chain is 3-methyl-2-oxobutanoate hydroxymethyltransferase (285 aa).

A disordered region spans residues 1-23 (MSEHNVYGAAQPAQPAQPAQPRT). Low complexity predominate over residues 9 to 21 (AAQPAQPAQPAQP). Residues Asp-66 and Asp-105 each contribute to the Mg(2+) site. 3-methyl-2-oxobutanoate is bound by residues 66 to 67 (DS), Asp-105, and Lys-135. Residue Glu-137 coordinates Mg(2+). The Proton acceptor role is filled by Glu-203.

This sequence belongs to the PanB family. As to quaternary structure, homodecamer; pentamer of dimers. Requires Mg(2+) as cofactor.

The protein localises to the cytoplasm. It catalyses the reaction 3-methyl-2-oxobutanoate + (6R)-5,10-methylene-5,6,7,8-tetrahydrofolate + H2O = 2-dehydropantoate + (6S)-5,6,7,8-tetrahydrofolate. It functions in the pathway cofactor biosynthesis; (R)-pantothenate biosynthesis; (R)-pantoate from 3-methyl-2-oxobutanoate: step 1/2. Functionally, catalyzes the reversible reaction in which hydroxymethyl group from 5,10-methylenetetrahydrofolate is transferred onto alpha-ketoisovalerate to form ketopantoate. In Mycobacterium avium (strain 104), this protein is 3-methyl-2-oxobutanoate hydroxymethyltransferase.